The sequence spans 274 residues: Malonyl-[acyl-carrier protein] O-methyltransferase (274 aa).

The protein belongs to the methyltransferase superfamily.

The catalysed reaction is malonyl-[ACP] + S-adenosyl-L-methionine = malonyl-[ACP] methyl ester + S-adenosyl-L-homocysteine. Its pathway is cofactor biosynthesis; biotin biosynthesis. Converts the free carboxyl group of a malonyl-thioester to its methyl ester by transfer of a methyl group from S-adenosyl-L-methionine (SAM). It allows to synthesize pimeloyl-ACP via the fatty acid synthetic pathway. This Priestia megaterium (strain DSM 319 / IMG 1521) (Bacillus megaterium) protein is Malonyl-[acyl-carrier protein] O-methyltransferase.